A 260-amino-acid chain; its full sequence is Cytochrome c oxidase subunit 3 (260 aa).

Over 1-15 (MAHQAHAYHMVDPSP) the chain is Mitochondrial matrix. The chain crosses the membrane as a helical span at residues 16–34 (WPLTGAVAALLLTSGLAMW). Over 35–40 (FHFGSM) the chain is Mitochondrial intermembrane. Residues 41-66 (ILLTLGLITMVLTMIQWWRDVIREGT) traverse the membrane as a helical segment. Over 67–72 (FQGHHT) the chain is Mitochondrial matrix. The chain crosses the membrane as a helical span at residues 73–105 (PPVQKGLRYGMILFITSEVFFFIGFFWAFYNSS). Over 106 to 128 (LAPTYELGECWPPTGITPLNPFE) the chain is Mitochondrial intermembrane. Residues 129 to 152 (VPLLNTAVLLASGVTVTWAHHSIM) traverse the membrane as a helical segment. Residues 153 to 155 (HGD) lie on the Mitochondrial matrix side of the membrane. The helical transmembrane segment at 156-183 (RKEAIQSLTLTILLGLYFTALQAMEYYE) threads the bilayer. The Mitochondrial intermembrane portion of the chain corresponds to 184–190 (APFTIAD). Residues 191 to 223 (GVYGSTFFVATGFHGLHVIIGSLFLSVCLLRQI) traverse the membrane as a helical segment. Topologically, residues 224 to 232 (QYHFTSKHH) are mitochondrial matrix. A helical transmembrane segment spans residues 233-255 (FGFEAAWYWHFVDVVWLFLYVSI). The Mitochondrial intermembrane portion of the chain corresponds to 256 to 260 (YWWGS).

It belongs to the cytochrome c oxidase subunit 3 family. In terms of assembly, component of the cytochrome c oxidase (complex IV, CIV), a multisubunit enzyme composed of 14 subunits. The complex is composed of a catalytic core of 3 subunits MT-CO1, MT-CO2 and MT-CO3, encoded in the mitochondrial DNA, and 11 supernumerary subunits COX4I, COX5A, COX5B, COX6A, COX6B, COX6C, COX7A, COX7B, COX7C, COX8 and NDUFA4, which are encoded in the nuclear genome. The complex exists as a monomer or a dimer and forms supercomplexes (SCs) in the inner mitochondrial membrane with NADH-ubiquinone oxidoreductase (complex I, CI) and ubiquinol-cytochrome c oxidoreductase (cytochrome b-c1 complex, complex III, CIII), resulting in different assemblies (supercomplex SCI(1)III(2)IV(1) and megacomplex MCI(2)III(2)IV(2)).

It is found in the mitochondrion inner membrane. It carries out the reaction 4 Fe(II)-[cytochrome c] + O2 + 8 H(+)(in) = 4 Fe(III)-[cytochrome c] + 2 H2O + 4 H(+)(out). In terms of biological role, component of the cytochrome c oxidase, the last enzyme in the mitochondrial electron transport chain which drives oxidative phosphorylation. The respiratory chain contains 3 multisubunit complexes succinate dehydrogenase (complex II, CII), ubiquinol-cytochrome c oxidoreductase (cytochrome b-c1 complex, complex III, CIII) and cytochrome c oxidase (complex IV, CIV), that cooperate to transfer electrons derived from NADH and succinate to molecular oxygen, creating an electrochemical gradient over the inner membrane that drives transmembrane transport and the ATP synthase. Cytochrome c oxidase is the component of the respiratory chain that catalyzes the reduction of oxygen to water. Electrons originating from reduced cytochrome c in the intermembrane space (IMS) are transferred via the dinuclear copper A center (CU(A)) of subunit 2 and heme A of subunit 1 to the active site in subunit 1, a binuclear center (BNC) formed by heme A3 and copper B (CU(B)). The BNC reduces molecular oxygen to 2 water molecules using 4 electrons from cytochrome c in the IMS and 4 protons from the mitochondrial matrix. In Xenopus laevis (African clawed frog), this protein is Cytochrome c oxidase subunit 3 (mt-co3).